The primary structure comprises 55 residues: Large ribosomal subunit protein bL33 (55 aa).

Belongs to the bacterial ribosomal protein bL33 family.

The chain is Large ribosomal subunit protein bL33 from Rhizobium meliloti (strain 1021) (Ensifer meliloti).